A 116-amino-acid polypeptide reads, in one-letter code: Ribosome-binding factor A (116 aa).

This sequence belongs to the RbfA family. Monomer. Binds 30S ribosomal subunits, but not 50S ribosomal subunits or 70S ribosomes.

The protein resides in the cytoplasm. Its function is as follows. One of several proteins that assist in the late maturation steps of the functional core of the 30S ribosomal subunit. Associates with free 30S ribosomal subunits (but not with 30S subunits that are part of 70S ribosomes or polysomes). Required for efficient processing of 16S rRNA. May interact with the 5'-terminal helix region of 16S rRNA. The sequence is that of Ribosome-binding factor A from Chlorobium phaeobacteroides (strain BS1).